We begin with the raw amino-acid sequence, 423 residues long: Adenylosuccinate synthetase (423 aa).

Residues 12-18 (GDEGKGK) and 40-42 (GHT) each bind GTP. Asp13 serves as the catalytic Proton acceptor. The Mg(2+) site is built by Asp13 and Gly40. Residues 13-16 (DEGK), 38-41 (NAGH), Thr129, Arg143, Gln221, Thr236, and Arg300 contribute to the IMP site. His41 acts as the Proton donor in catalysis. 296-302 (AVTGRER) is a binding site for substrate. GTP contacts are provided by residues Arg302, 328-330 (KSD), and 408-410 (SVG).

Belongs to the adenylosuccinate synthetase family. In terms of assembly, homodimer. It depends on Mg(2+) as a cofactor.

The protein localises to the cytoplasm. It catalyses the reaction IMP + L-aspartate + GTP = N(6)-(1,2-dicarboxyethyl)-AMP + GDP + phosphate + 2 H(+). The protein operates within purine metabolism; AMP biosynthesis via de novo pathway; AMP from IMP: step 1/2. Plays an important role in the de novo pathway of purine nucleotide biosynthesis. Catalyzes the first committed step in the biosynthesis of AMP from IMP. This Phocaeicola vulgatus (strain ATCC 8482 / DSM 1447 / JCM 5826 / CCUG 4940 / NBRC 14291 / NCTC 11154) (Bacteroides vulgatus) protein is Adenylosuccinate synthetase.